The sequence spans 320 residues: Acetyl-coenzyme A carboxylase carboxyl transferase subunit alpha (320 aa).

Residues 42-295 (IEDKAKAALH…GDAIAQAFSD (254 aa)) form the CoA carboxyltransferase C-terminal domain.

This sequence belongs to the AccA family. In terms of assembly, acetyl-CoA carboxylase is a heterohexamer composed of biotin carboxyl carrier protein (AccB), biotin carboxylase (AccC) and two subunits each of ACCase subunit alpha (AccA) and ACCase subunit beta (AccD).

It is found in the cytoplasm. It catalyses the reaction N(6)-carboxybiotinyl-L-lysyl-[protein] + acetyl-CoA = N(6)-biotinyl-L-lysyl-[protein] + malonyl-CoA. It participates in lipid metabolism; malonyl-CoA biosynthesis; malonyl-CoA from acetyl-CoA: step 1/1. In terms of biological role, component of the acetyl coenzyme A carboxylase (ACC) complex. First, biotin carboxylase catalyzes the carboxylation of biotin on its carrier protein (BCCP) and then the CO(2) group is transferred by the carboxyltransferase to acetyl-CoA to form malonyl-CoA. This Afipia carboxidovorans (strain ATCC 49405 / DSM 1227 / KCTC 32145 / OM5) (Oligotropha carboxidovorans) protein is Acetyl-coenzyme A carboxylase carboxyl transferase subunit alpha.